A 30-amino-acid polypeptide reads, in one-letter code: Photosystem I reaction center subunit XII (30 aa).

Residues isoleucine 7 to threonine 26 traverse the membrane as a helical segment.

The protein belongs to the PsaM family.

It is found in the plastid. Its subcellular location is the chloroplast thylakoid membrane. The protein is Photosystem I reaction center subunit XII of Gracilaria tenuistipitata var. liui (Red alga).